The following is a 1096-amino-acid chain: cAMP/cGMP-dependent 3',5'-cAMP/cGMP phosphodiesterase B (1096 aa).

The interval S216–Q248 is disordered. Over residues S225 to E236 the composition is skewed to polar residues. A divalent metal cation-binding residues include H573, H575, and D577. Residues V783–H930 and I946–I1070 contribute to the a nucleoside 3',5'-cyclic phosphate site.

Belongs to the metallo-beta-lactamase superfamily. cNMP phosphodiesterase family. The cofactor is Mn(2+). Mg(2+) serves as cofactor. It depends on Zn(2+) as a cofactor.

The protein resides in the cytoplasm. Its subcellular location is the cytosol. It carries out the reaction 3',5'-cyclic AMP + H2O = AMP + H(+). The catalysed reaction is 3',5'-cyclic GMP + H2O = GMP + H(+). In terms of biological role, dual specificity cAMP and cGMP phosphodiesterase with marked preference for cyclic AMP, which is activated by cAMP and cGMP. Likely functions as a cAMP-stimulated cAMP-phosphodiesterase which may play a role in regulating the cAMP relay response. The protein is cAMP/cGMP-dependent 3',5'-cAMP/cGMP phosphodiesterase B (pdeE) of Dictyostelium discoideum (Social amoeba).